The sequence spans 572 residues: Isocitrate lyase (572 aa).

104–106 (SGW) lines the substrate pocket. Aspartate 175 is a binding site for Mg(2+). The Proton acceptor role is filled by cysteine 213. Residues 214-215 (GH), arginine 250, 437-441 (NLSPS), and threonine 472 each bind substrate. The segment at 550 to 572 (QFKGSWTGPGSESSSHVLAKSRM) is disordered. Residues 570 to 572 (SRM) carry the Microbody targeting signal motif.

The protein belongs to the isocitrate lyase/PEP mutase superfamily. Isocitrate lyase family. Mg(2+) serves as cofactor. As to expression, expressed in leaves.

It is found in the glyoxysome. It catalyses the reaction D-threo-isocitrate = glyoxylate + succinate. The protein operates within carbohydrate metabolism; glyoxylate cycle; (S)-malate from isocitrate: step 1/2. Involved in storage lipid mobilization during the growth of higher plant seedling. This Oryza sativa subsp. japonica (Rice) protein is Isocitrate lyase.